Here is a 143-residue protein sequence, read N- to C-terminus: MAKAIPKIGSRKKVRIGLRRNARFSLRKSARRITKGVIHVQASFNNTIITVTDPQGRVVFWSSAGTCGFKSSRKASPYAGQRTAVDAIRTVGLQRAEVMVKGAGSGRDAALRAIAKSGVRLSCIRDVTPMPHNGCRPPKKRRL.

It belongs to the universal ribosomal protein uS11 family. In terms of assembly, part of the 30S ribosomal subunit.

Its subcellular location is the plastid. The protein resides in the chloroplast. The chain is Small ribosomal subunit protein uS11c from Hordeum vulgare (Barley).